Reading from the N-terminus, the 258-residue chain is UPF0246 protein YaaA (258 aa).

Belongs to the UPF0246 family.

The chain is UPF0246 protein YaaA from Shigella sonnei (strain Ss046).